A 2081-amino-acid polypeptide reads, in one-letter code: RNA1 polyprotein (2081 aa).

A run of 2 helical transmembrane segments spans residues 481–501 and 515–535; these read ILLLLGVFLCLGLVNSLIYSV and ISLGALALVGLGDLVAYLFNS. The SF3 helicase domain occupies 714–881; the sequence is LKEDHTQLQL…PGVEPGPRGV (168 aa). 741-748 serves as a coordination point for ATP; sequence GDSGVGKS. The segment at 877–900 is disordered; that stretch reads GPRGVDNLEFSEMDNRDSNGEPAY. A Peptidase C3 domain is found at 1166 to 1388; the sequence is GAEIPEALEA…ALYADIPHEF (223 aa). Catalysis depends on for picornain 3C-like protease activity residues histidine 1210, glutamate 1255, and cysteine 1348. Residues 1679 to 1810 form the RdRp catalytic domain; sequence ANHFTGDYSG…SVATPVASVY (132 aa).

It is found in the host membrane. The enzyme catalyses RNA(n) + a ribonucleoside 5'-triphosphate = RNA(n+1) + diphosphate. In terms of biological role, picornain 3C-like protease is a thiol protease that probably cleaves the polyprotein. This is RNA1 polyprotein from Citrus unshiu (Satsuma mandarin).